The following is a 143-amino-acid chain: Transcriptional regulator MraZ (143 aa).

SpoVT-AbrB domains follow at residues 5 to 47 (TYEP…SAEE) and 76 to 119 (ASDE…DAAA).

Belongs to the MraZ family. Forms oligomers.

It is found in the cytoplasm. Its subcellular location is the nucleoid. This Kocuria rhizophila (strain ATCC 9341 / DSM 348 / NBRC 103217 / DC2201) protein is Transcriptional regulator MraZ.